The following is a 190-amino-acid chain: MSEQEKDQNNAEPQVETVEEQQAAAAAEAVEPTAEEKLAEVEVELAKVKKALAEADVRAQAEVQNVRKRAERDVQHARKFALEKFAGDLLSVADNLERGLAALDAEDDALKGAREGIELTLKSLLDAFARYNIEQINPADEPFNPELHEAMTMVPVPNVDPNSVIEVLEKGYQLNGRLIRPARVVVSKAP.

The tract at residues 1 to 33 (MSEQEKDQNNAEPQVETVEEQQAAAAAEAVEPT) is disordered. Residues 11-32 (AEPQVETVEEQQAAAAAEAVEP) are compositionally biased toward low complexity.

The protein belongs to the GrpE family. In terms of assembly, homodimer.

The protein localises to the cytoplasm. Its function is as follows. Participates actively in the response to hyperosmotic and heat shock by preventing the aggregation of stress-denatured proteins, in association with DnaK and GrpE. It is the nucleotide exchange factor for DnaK and may function as a thermosensor. Unfolded proteins bind initially to DnaJ; upon interaction with the DnaJ-bound protein, DnaK hydrolyzes its bound ATP, resulting in the formation of a stable complex. GrpE releases ADP from DnaK; ATP binding to DnaK triggers the release of the substrate protein, thus completing the reaction cycle. Several rounds of ATP-dependent interactions between DnaJ, DnaK and GrpE are required for fully efficient folding. The polypeptide is Protein GrpE (Alcanivorax borkumensis (strain ATCC 700651 / DSM 11573 / NCIMB 13689 / SK2)).